Consider the following 459-residue polypeptide: Bifunctional protein GlmU (459 aa).

The interval 1 to 230 is pyrophosphorylase; that stretch reads MSNRFAVILA…FDETLGVNDR (230 aa). Residues 9-12, Lys23, Gln73, and 78-79 each bind UDP-N-acetyl-alpha-D-glucosamine; these read LAAG and GT. Asp103 lines the Mg(2+) pocket. Residues Gly140, Glu155, Asn170, and Asn228 each coordinate UDP-N-acetyl-alpha-D-glucosamine. Mg(2+) is bound at residue Asn228. Residues 231–251 are linker; it reads VALSQAEVIMKNRINHKNMVN. An N-acetyltransferase region spans residues 252 to 459; that stretch reads GVTIIDPSNT…VDQLLNKKKS (208 aa). Residues Arg333 and Lys351 each contribute to the UDP-N-acetyl-alpha-D-glucosamine site. The active-site Proton acceptor is His363. Positions 366 and 377 each coordinate UDP-N-acetyl-alpha-D-glucosamine. Residues 386-387, Ala423, and Arg440 contribute to the acetyl-CoA site; that span reads NY.

In the N-terminal section; belongs to the N-acetylglucosamine-1-phosphate uridyltransferase family. The protein in the C-terminal section; belongs to the transferase hexapeptide repeat family. As to quaternary structure, homotrimer. Requires Mg(2+) as cofactor.

The protein resides in the cytoplasm. The catalysed reaction is alpha-D-glucosamine 1-phosphate + acetyl-CoA = N-acetyl-alpha-D-glucosamine 1-phosphate + CoA + H(+). It catalyses the reaction N-acetyl-alpha-D-glucosamine 1-phosphate + UTP + H(+) = UDP-N-acetyl-alpha-D-glucosamine + diphosphate. Its pathway is nucleotide-sugar biosynthesis; UDP-N-acetyl-alpha-D-glucosamine biosynthesis; N-acetyl-alpha-D-glucosamine 1-phosphate from alpha-D-glucosamine 6-phosphate (route II): step 2/2. The protein operates within nucleotide-sugar biosynthesis; UDP-N-acetyl-alpha-D-glucosamine biosynthesis; UDP-N-acetyl-alpha-D-glucosamine from N-acetyl-alpha-D-glucosamine 1-phosphate: step 1/1. It functions in the pathway bacterial outer membrane biogenesis; LPS lipid A biosynthesis. Catalyzes the last two sequential reactions in the de novo biosynthetic pathway for UDP-N-acetylglucosamine (UDP-GlcNAc). The C-terminal domain catalyzes the transfer of acetyl group from acetyl coenzyme A to glucosamine-1-phosphate (GlcN-1-P) to produce N-acetylglucosamine-1-phosphate (GlcNAc-1-P), which is converted into UDP-GlcNAc by the transfer of uridine 5-monophosphate (from uridine 5-triphosphate), a reaction catalyzed by the N-terminal domain. In Bacillus cytotoxicus (strain DSM 22905 / CIP 110041 / 391-98 / NVH 391-98), this protein is Bifunctional protein GlmU.